The following is a 357-amino-acid chain: UDP-N-acetylglucosamine--N-acetylmuramyl-(pentapeptide) pyrophosphoryl-undecaprenol N-acetylglucosamine transferase (357 aa).

Residues 13-15 (TGG), N125, R161, S189, I243, and Q288 contribute to the UDP-N-acetyl-alpha-D-glucosamine site.

It belongs to the glycosyltransferase 28 family. MurG subfamily.

It localises to the cell inner membrane. It carries out the reaction di-trans,octa-cis-undecaprenyl diphospho-N-acetyl-alpha-D-muramoyl-L-alanyl-D-glutamyl-meso-2,6-diaminopimeloyl-D-alanyl-D-alanine + UDP-N-acetyl-alpha-D-glucosamine = di-trans,octa-cis-undecaprenyl diphospho-[N-acetyl-alpha-D-glucosaminyl-(1-&gt;4)]-N-acetyl-alpha-D-muramoyl-L-alanyl-D-glutamyl-meso-2,6-diaminopimeloyl-D-alanyl-D-alanine + UDP + H(+). It participates in cell wall biogenesis; peptidoglycan biosynthesis. In terms of biological role, cell wall formation. Catalyzes the transfer of a GlcNAc subunit on undecaprenyl-pyrophosphoryl-MurNAc-pentapeptide (lipid intermediate I) to form undecaprenyl-pyrophosphoryl-MurNAc-(pentapeptide)GlcNAc (lipid intermediate II). This is UDP-N-acetylglucosamine--N-acetylmuramyl-(pentapeptide) pyrophosphoryl-undecaprenol N-acetylglucosamine transferase from Bordetella pertussis (strain Tohama I / ATCC BAA-589 / NCTC 13251).